The following is a 545-amino-acid chain: MADGVDHIDIYADVEEEFNQESDYPVHDQIDLYDDVISPSANNGDAPEDRDYLDSLPAPGGNEGSKGAPANVVYTYNGKRIALYIGNLTWWTTDEDLTDAIRSIGINDVLEIKFFENRANGQSKGFALVCVGSDSSSRKLMDLLSKRELHGQNPIVTPCNKQSLSQFEMQSRKSTQSGQMSGEGKAGPPGSGSRGGGFPPGKGQRRFPGPPGQGDRFPGPVGPGGPPPHFPGMQGPPRLPSGPPGPLGPPGPPPPGQGLPPPLGGPPNRGDRPPPPVLFPGQFGQPPMGPMPPGPPPPGYGPPPGPPPPQQGPPPPGPFPPRPPGPLGPPLGLAPPPHMQGPPPGGPPPAPHVNPAFFPPPGNNMPSSDGRGPPPGDPYGRPPPYDRDFPGGRDMDASRTPLSEAEFEEIMNRNRAISSSAISRAVSDASAADYGSAIETLVTAISLIKQSKVSADDRCKVLISSLQDCLHGIESKSYGSVAGRRERSRERDHSRSREKSRRHKSRSRDRHEDYYRERSRERDRHRERDRDRERDREREREYRHR.

The segment at 37–69 is disordered; that stretch reads ISPSANNGDAPEDRDYLDSLPAPGGNEGSKGAP. The region spanning 81–161 is the RRM domain; that stretch reads IALYIGNLTW…QNPIVTPCNK (81 aa). Over residues 165–180 the composition is skewed to polar residues; the sequence is SQFEMQSRKSTQSGQM. Disordered stretches follow at residues 165 to 404 and 478 to 545; these read SQFE…PLSE and YGSV…YRHR. Gly residues predominate over residues 184 to 200; that stretch reads GKAGPPGSGSRGGGFPP. 4 stretches are compositionally biased toward pro residues: residues 220–230, 237–265, 287–363, and 372–383; these read PVGPGGPPPHF, PRLP…PLGG, PMGP…PPGN, and GPPPGDPYGRPP. Composition is skewed to basic and acidic residues over residues 384-397 and 483-497; these read PYDR…DMDA and GRRE…SRSR. A compositionally biased stretch (basic residues) spans 498–508; that stretch reads EKSRRHKSRSR. Residues 509–545 show a composition bias toward basic and acidic residues; sequence DRHEDYYRERSRERDRHRERDRDRERDREREREYRHR.

This sequence belongs to the RRM CPSF6/7 family. As to quaternary structure, component of the cleavage factor Im (CFIm) complex.

It localises to the nucleus. The protein localises to the nucleoplasm. The protein resides in the nucleus speckle. Its subcellular location is the cytoplasm. In terms of biological role, component of the cleavage factor Im (CFIm) complex that functions as an activator of the pre-mRNA 3'-end cleavage and polyadenylation processing required for the maturation of pre-mRNA into functional mRNAs. CFIm contributes to the recruitment of multiprotein complexes on specific sequences on the pre-mRNA 3'-end, so called cleavage and polyadenylation signals (pA signals). Most pre-mRNAs contain multiple pA signals, resulting in alternative cleavage and polyadenylation (APA) producing mRNAs with variable 3'-end formation. The CFIm complex acts as a key regulator of cleavage and polyadenylation site choice during APA through its binding to 5'-UGUA-3' elements localized in the 3'-untranslated region (UTR) for a huge number of pre-mRNAs. Plays a role in mRNA export. In Danio rerio (Zebrafish), this protein is Cleavage and polyadenylation specificity factor subunit 6.